We begin with the raw amino-acid sequence, 210 residues long: Thymidylate kinase (210 aa).

An ATP-binding site is contributed by 10 to 17 (GPEGAGKS).

It belongs to the thymidylate kinase family.

The enzyme catalyses dTMP + ATP = dTDP + ADP. Phosphorylation of dTMP to form dTDP in both de novo and salvage pathways of dTTP synthesis. This is Thymidylate kinase from Pseudomonas putida (strain ATCC 700007 / DSM 6899 / JCM 31910 / BCRC 17059 / LMG 24140 / F1).